Reading from the N-terminus, the 387-residue chain is 8-amino-7-oxononanoate synthase (387 aa).

109-110 is a pyridoxal 5'-phosphate binding site; it reads GY. His134 serves as a coordination point for substrate. The pyridoxal 5'-phosphate site is built by Ser182, His214, and Thr242. N6-(pyridoxal phosphate)lysine is present on Lys245. Thr359 is a substrate binding site.

Belongs to the class-II pyridoxal-phosphate-dependent aminotransferase family. BioF subfamily. In terms of assembly, homodimer. The cofactor is pyridoxal 5'-phosphate.

It carries out the reaction 6-carboxyhexanoyl-[ACP] + L-alanine + H(+) = (8S)-8-amino-7-oxononanoate + holo-[ACP] + CO2. The protein operates within cofactor biosynthesis; biotin biosynthesis. In terms of biological role, catalyzes the decarboxylative condensation of pimeloyl-[acyl-carrier protein] and L-alanine to produce 8-amino-7-oxononanoate (AON), [acyl-carrier protein], and carbon dioxide. The polypeptide is 8-amino-7-oxononanoate synthase (Haemophilus ducreyi (strain 35000HP / ATCC 700724)).